Consider the following 437-residue polypeptide: RNA-binding motif, single-stranded-interacting protein 3 (437 aa).

The segment at 28–57 (YAPAPHPMAPPSPSTNSSSNNSSNNSSGEQ) is disordered. Pro residues predominate over residues 31–40 (APHPMAPPSP). A compositionally biased stretch (low complexity) spans 41–54 (STNSSSNNSSNNSS). 2 consecutive RRM domains span residues 61–134 (TNLY…MAKQ) and 140–225 (TNLY…FADG). Residues 399–422 (TSPQTVAPSSQDTSGQQQQIAVDT) show a composition bias toward polar residues. Positions 399–437 (TSPQTVAPSSQDTSGQQQQIAVDTSNEHAPAYSYQQSKP) are disordered.

As to expression, expressed in fetal brain, fetal lung, fetal liver, heart, brain, placenta, lung, liver, muscle, kidney and pancreas.

The protein localises to the cytoplasm. Binds poly(A) and poly(U) oligoribonucleotides. This Homo sapiens (Human) protein is RNA-binding motif, single-stranded-interacting protein 3 (RBMS3).